The chain runs to 477 residues: ATP synthase subunit beta (477 aa).

163–170 (GGAGVGKT) lines the ATP pocket.

The protein belongs to the ATPase alpha/beta chains family. As to quaternary structure, F-type ATPases have 2 components, CF(1) - the catalytic core - and CF(0) - the membrane proton channel. CF(1) has five subunits: alpha(3), beta(3), gamma(1), delta(1), epsilon(1). CF(0) has four main subunits: a(1), b(1), b'(1) and c(9-12).

It localises to the cellular thylakoid membrane. It carries out the reaction ATP + H2O + 4 H(+)(in) = ADP + phosphate + 5 H(+)(out). Its function is as follows. Produces ATP from ADP in the presence of a proton gradient across the membrane. The catalytic sites are hosted primarily by the beta subunits. This Synechococcus sp. (strain JA-3-3Ab) (Cyanobacteria bacterium Yellowstone A-Prime) protein is ATP synthase subunit beta.